A 177-amino-acid chain; its full sequence is Large ribosomal subunit protein uL6 (177 aa).

The protein belongs to the universal ribosomal protein uL6 family. Part of the 50S ribosomal subunit.

This protein binds to the 23S rRNA, and is important in its secondary structure. It is located near the subunit interface in the base of the L7/L12 stalk, and near the tRNA binding site of the peptidyltransferase center. The sequence is that of Large ribosomal subunit protein uL6 from Bartonella quintana (strain Toulouse) (Rochalimaea quintana).